The primary structure comprises 61 residues: Probable tautomerase SAV1363 (61 aa).

P2 (proton acceptor; via imino nitrogen) is an active-site residue.

The protein belongs to the 4-oxalocrotonate tautomerase family.

This chain is Probable tautomerase SAV1363, found in Staphylococcus aureus (strain Mu50 / ATCC 700699).